Consider the following 462-residue polypeptide: UDP-N-acetylmuramoylalanine--D-glutamate ligase (462 aa).

117–123 (GTNGKTT) serves as a coordination point for ATP.

It belongs to the MurCDEF family.

Its subcellular location is the cytoplasm. It catalyses the reaction UDP-N-acetyl-alpha-D-muramoyl-L-alanine + D-glutamate + ATP = UDP-N-acetyl-alpha-D-muramoyl-L-alanyl-D-glutamate + ADP + phosphate + H(+). The protein operates within cell wall biogenesis; peptidoglycan biosynthesis. Functionally, cell wall formation. Catalyzes the addition of glutamate to the nucleotide precursor UDP-N-acetylmuramoyl-L-alanine (UMA). This Parasynechococcus marenigrum (strain WH8102) protein is UDP-N-acetylmuramoylalanine--D-glutamate ligase.